A 568-amino-acid chain; its full sequence is Circadian clock protein KaiC2 (568 aa).

KaiC domains lie at 11 to 250 (IKCP…SVSQ) and 251 to 485 (ERIS…LTGT). Phosphoserine; by autocatalysis occurs at positions 423 and 424.

It belongs to the KaiC family. In terms of assembly, multimerizes, probably forming homohexamers, no interaction with KaiC1 or KaiC3 is seen.

The catalysed reaction is L-seryl-[protein] + ATP = O-phospho-L-seryl-[protein] + ADP + H(+). It carries out the reaction L-threonyl-[protein] + ATP = O-phospho-L-threonyl-[protein] + ADP + H(+). It catalyses the reaction ATP + H2O = ADP + phosphate + H(+). Its function is as follows. Autophosphorylates independently of KaiA. The sequence is that of Circadian clock protein KaiC2 from Synechocystis sp. (strain ATCC 27184 / PCC 6803 / Kazusa).